A 424-amino-acid chain; its full sequence is Arginine ADP-riboxanase OspC4 (424 aa).

11 residues coordinate NAD(+): H85, Q86, S87, L91, I104, N114, F130, H148, F153, D173, and E268. E268 is a catalytic residue. ANK repeat units lie at residues 311–340, 355–386, and 393–422; these read MAHQ…FTKQ, NLYD…DVNK, and SGDT…GIRQ.

The protein belongs to the OspC family.

Its subcellular location is the secreted. The protein localises to the host cytoplasm. It catalyses the reaction L-arginyl-[protein] + NAD(+) = ADP-riboxanated L-argininyl-[protein] + nicotinamide + NH4(+) + H(+). ADP-riboxanase effector that mediates arginine ADP-riboxanation of host caspase CASP4/CASP11, thereby inhibiting pyroptosis. This is Arginine ADP-riboxanase OspC4 from Shigella flexneri.